The following is a 161-amino-acid chain: Cyclic pyranopterin monophosphate synthase (161 aa).

Residues 75–77 (MCH) and 115–116 (ME) each bind substrate. Asp130 is a catalytic residue.

Belongs to the MoaC family. Homohexamer; trimer of dimers.

It carries out the reaction (8S)-3',8-cyclo-7,8-dihydroguanosine 5'-triphosphate = cyclic pyranopterin phosphate + diphosphate. The protein operates within cofactor biosynthesis; molybdopterin biosynthesis. Catalyzes the conversion of (8S)-3',8-cyclo-7,8-dihydroguanosine 5'-triphosphate to cyclic pyranopterin monophosphate (cPMP). This chain is Cyclic pyranopterin monophosphate synthase, found in Bacillus cereus (strain 03BB102).